Reading from the N-terminus, the 212-residue chain is Pyridoxine/pyridoxamine 5'-phosphate oxidase (212 aa).

Residues 8-11 and lysine 66 contribute to the substrate site; that span reads RREY. FMN contacts are provided by residues 61–66, 76–77, arginine 82, lysine 83, and glutamine 105; these read RIVLLK and FT. Residues tyrosine 123, arginine 127, and serine 131 each contribute to the substrate site. FMN contacts are provided by residues 140 to 141 and tryptophan 185; that span reads QS. Residue 191–193 participates in substrate binding; sequence RLH. An FMN-binding site is contributed by arginine 195.

Belongs to the pyridoxamine 5'-phosphate oxidase family. In terms of assembly, homodimer. FMN is required as a cofactor.

The enzyme catalyses pyridoxamine 5'-phosphate + O2 + H2O = pyridoxal 5'-phosphate + H2O2 + NH4(+). It carries out the reaction pyridoxine 5'-phosphate + O2 = pyridoxal 5'-phosphate + H2O2. It functions in the pathway cofactor metabolism; pyridoxal 5'-phosphate salvage; pyridoxal 5'-phosphate from pyridoxamine 5'-phosphate: step 1/1. Its pathway is cofactor metabolism; pyridoxal 5'-phosphate salvage; pyridoxal 5'-phosphate from pyridoxine 5'-phosphate: step 1/1. Its function is as follows. Catalyzes the oxidation of either pyridoxine 5'-phosphate (PNP) or pyridoxamine 5'-phosphate (PMP) into pyridoxal 5'-phosphate (PLP). The sequence is that of Pyridoxine/pyridoxamine 5'-phosphate oxidase from Shewanella amazonensis (strain ATCC BAA-1098 / SB2B).